Reading from the N-terminus, the 422-residue chain is L-2-hydroxyglutarate dehydrogenase (422 aa).

Belongs to the L2HGDH family. Requires FAD as cofactor.

It is found in the cell inner membrane. It carries out the reaction (S)-2-hydroxyglutarate + a quinone = a quinol + 2-oxoglutarate. It functions in the pathway amino-acid degradation. Functionally, catalyzes the dehydrogenation of L-2-hydroxyglutarate (L2HG) to alpha-ketoglutarate and couples to the respiratory chain by feeding electrons from the reaction into the membrane quinone pool. Functions in a L-lysine degradation pathway that proceeds via cadaverine, glutarate and L-2-hydroxyglutarate. Also displays some oxidase activity in vitro on L-2-hydroxyglutarate with O2 as the electron acceptor, but this activity is most likely not physiological. The sequence is that of L-2-hydroxyglutarate dehydrogenase from Escherichia coli O17:K52:H18 (strain UMN026 / ExPEC).